The primary structure comprises 99 residues: UPF0235 protein Avin_03050 (99 aa).

The interval 66-99 is disordered; it reads VSLESGESNRQKRVRIRRPRQLPALPGLAPRPDA. Residues 76–85 show a composition bias toward basic residues; sequence QKRVRIRRPR.

It belongs to the UPF0235 family.

This chain is UPF0235 protein Avin_03050, found in Azotobacter vinelandii (strain DJ / ATCC BAA-1303).